Consider the following 138-residue polypeptide: Endoribonuclease YbeY (138 aa).

Zn(2+) contacts are provided by histidine 105, histidine 109, and aspartate 115.

The protein belongs to the endoribonuclease YbeY family. Zn(2+) serves as cofactor.

It is found in the cytoplasm. Functionally, single strand-specific metallo-endoribonuclease involved in late-stage 70S ribosome quality control and in maturation of the 3' terminus of the 16S rRNA. In Chlorobium phaeobacteroides (strain BS1), this protein is Endoribonuclease YbeY.